Consider the following 458-residue polypeptide: Protein adenylyltransferase FICD (458 aa).

The Cytoplasmic portion of the chain corresponds to 1 to 23 (MILMPMASVVAVAEPKWVSVWGR). The chain crosses the membrane as a helical; Signal-anchor for type II membrane protein span at residues 24–44 (FLWMTLLSMALGSLLALLLPL). Over 45–458 (GAVEEQCLAV…GFKETLPVRP (414 aa)) the chain is Lumenal. Ser79 is subject to O-AMP-serine; by autocatalysis. Thr80 carries the post-translational modification O-AMP-threonine; by autocatalysis. 2 TPR repeats span residues 106 to 139 (AKAA…DPGF) and 140 to 173 (VDAL…SPFH). An O-AMP-threonine; by autocatalysis modification is found at Thr183. The Inhibitory (S/T)XXXE(G/N) motif motif lies at 230–235 (TVAIEG). Glu234 lines the ATP pocket. Asn275 is a glycosylation site (N-linked (GlcNAc...) asparagine). The region spanning 285–420 (VTIDHMLEIH…VRPFIRFIAK (136 aa)) is the Fido domain. ATP is bound at residue 316–319 (VGHH). His363 is a catalytic residue. ATP is bound by residues 367–374 (DGNGRTSR), 399–400 (YY), and Asn407.

It belongs to the fic family. As to quaternary structure, homodimer. Interacts with HD. Mg(2+) is required as a cofactor. Requires Mn(2+) as cofactor. Auto-AMPylated in vitro.

The protein localises to the endoplasmic reticulum membrane. The enzyme catalyses L-tyrosyl-[protein] + ATP = O-(5'-adenylyl)-L-tyrosyl-[protein] + diphosphate. It catalyses the reaction 3-O-(5'-adenylyl)-L-threonyl-[protein] + H2O = L-threonyl-[protein] + AMP + H(+). It carries out the reaction L-threonyl-[protein] + ATP = 3-O-(5'-adenylyl)-L-threonyl-[protein] + diphosphate. The side chain of Glu-234 determines which of the two opposing activities (AMPylase or de-AMPylase) will take place. In response to endoplasmic reticulum stress, mediates de-AMPylase activity. Adenylyltransferase activity is inhibited by the inhibitory helix present at the N-terminus: Glu-234 binds ATP and competes with ATP-binding at Arg-374, thereby preventing adenylyltransferase activity. In unstressed cells, disengagement of Glu-234 promotes adenylyltransferase activity. Activation dissociates ATP-binding from Glu-234, allowing ordered binding of the entire ATP moiety with the alpha-phosphate in an orientation that is productive for accepting an incoming target hydroxyl side chain. Functionally, protein that can both mediate the addition of adenosine 5'-monophosphate (AMP) to specific residues of target proteins (AMPylation), and the removal of the same modification from target proteins (de-AMPylation), depending on the context. The side chain of Glu-231 determines which of the two opposing activities (AMPylase or de-AMPylase) will take place. Acts as a key regulator of the ERN1/IRE1-mediated unfolded protein response (UPR) by mediating AMPylation or de-AMPylation of HSPA5/BiP. In unstressed cells, acts as an adenylyltransferase by mediating AMPylation of HSPA5/BiP at 'Thr-518', thereby inactivating it. In response to endoplasmic reticulum stress, acts as a phosphodiesterase by mediating removal of ATP (de-AMPylation) from HSPA5/BiP at 'Thr-518', leading to restore HSPA5/BiP activity. Although it is able to AMPylate RhoA, Rac and Cdc42 Rho GTPases in vitro, Rho GTPases do not constitute physiological substrates. The chain is Protein adenylyltransferase FICD from Rattus norvegicus (Rat).